Consider the following 904-residue polypeptide: Eukaryotic translation initiation factor 3 subunit C (904 aa).

Disordered stretches follow at residues 1–38 and 156–290; these read MSRFFAGGSESDSDSSSDSEPIQRQTAPQFTFSDEEED and FRES…TSEK. The span at 22–32 shows a compositional bias: polar residues; it reads IQRQTAPQFTF. The span at 161 to 183 shows a compositional bias: acidic residues; sequence DAADDEDEEEEKKEEEESDDEEA. Positions 194–206 are enriched in basic and acidic residues; sequence FKKDTVEKVKVEK. Residues 207 to 232 show a composition bias toward acidic residues; the sequence is DDDDSDDSIDWGQDSDSDESSSEEEA. Residues 237 to 247 are compositionally biased toward basic and acidic residues; sequence IRERFLKRPEK. The span at 257 to 272 shows a compositional bias: basic residues; it reads KEKKKTKETKDSRKKK. The PCI domain maps to 636 to 812; that stretch reads FHMHINLELL…ETVVLHRSEP (177 aa). Positions 847–904 are disordered; sequence RGGNQGYNRDRQNYRNQNQNRENWNNNRRQDRGNRNRNQNRDREQREQHRVEFEEKAE. The span at 860–873 shows a compositional bias: low complexity; that stretch reads YRNQNQNRENWNNN. Residues 874–904 show a composition bias toward basic and acidic residues; sequence RRQDRGNRNRNQNRDREQREQHRVEFEEKAE.

This sequence belongs to the eIF-3 subunit C family. In terms of assembly, component of the eukaryotic translation initiation factor 3 (eIF-3) complex.

It is found in the cytoplasm. Its function is as follows. Component of the eukaryotic translation initiation factor 3 (eIF-3) complex, which is involved in protein synthesis of a specialized repertoire of mRNAs and, together with other initiation factors, stimulates binding of mRNA and methionyl-tRNAi to the 40S ribosome. The eIF-3 complex specifically targets and initiates translation of a subset of mRNAs involved in cell proliferation. The protein is Eukaryotic translation initiation factor 3 subunit C of Culex quinquefasciatus (Southern house mosquito).